The chain runs to 343 residues: Probable dual-specificity RNA methyltransferase RlmN (343 aa).

E91 functions as the Proton acceptor in the catalytic mechanism. In terms of domain architecture, Radical SAM core spans H97–D326. A disulfide bridge connects residues C104 and C331. C111, C115, and C118 together coordinate [4Fe-4S] cluster. S-adenosyl-L-methionine is bound by residues G158–E159, S190, S213–H215, and N289. C331 functions as the S-methylcysteine intermediate in the catalytic mechanism.

It belongs to the radical SAM superfamily. RlmN family. The cofactor is [4Fe-4S] cluster.

Its subcellular location is the cytoplasm. It carries out the reaction adenosine(2503) in 23S rRNA + 2 reduced [2Fe-2S]-[ferredoxin] + 2 S-adenosyl-L-methionine = 2-methyladenosine(2503) in 23S rRNA + 5'-deoxyadenosine + L-methionine + 2 oxidized [2Fe-2S]-[ferredoxin] + S-adenosyl-L-homocysteine. The catalysed reaction is adenosine(37) in tRNA + 2 reduced [2Fe-2S]-[ferredoxin] + 2 S-adenosyl-L-methionine = 2-methyladenosine(37) in tRNA + 5'-deoxyadenosine + L-methionine + 2 oxidized [2Fe-2S]-[ferredoxin] + S-adenosyl-L-homocysteine. Specifically methylates position 2 of adenine 2503 in 23S rRNA and position 2 of adenine 37 in tRNAs. The sequence is that of Probable dual-specificity RNA methyltransferase RlmN from Thermotoga neapolitana (strain ATCC 49049 / DSM 4359 / NBRC 107923 / NS-E).